We begin with the raw amino-acid sequence, 59 residues long: Large ribosomal subunit protein bL32 (59 aa).

Residues 1–16 (MAVPKRKTSPSKRGMR) are compositionally biased toward basic residues. The disordered stretch occupies residues 1 to 41 (MAVPKRKTSPSKRGMRRSADALKAPTYIEDKNSGELRRPHH). Over residues 28-41 (IEDKNSGELRRPHH) the composition is skewed to basic and acidic residues.

The protein belongs to the bacterial ribosomal protein bL32 family.

This Bartonella henselae (strain ATCC 49882 / DSM 28221 / CCUG 30454 / Houston 1) (Rochalimaea henselae) protein is Large ribosomal subunit protein bL32.